Reading from the N-terminus, the 58-residue chain is Large ribosomal subunit protein uL30 (58 aa).

It belongs to the universal ribosomal protein uL30 family. In terms of assembly, part of the 50S ribosomal subunit.

In Vibrio vulnificus (strain CMCP6), this protein is Large ribosomal subunit protein uL30.